The primary structure comprises 92 residues: Putative phosphotransferase enzyme IIB component BB_0367 (92 aa).

Positions 10 to 92 (IKVAEHIVEC…ILYMMNEQKQ (83 aa)) constitute a PTS EIIB type-1 domain.

The protein resides in the cytoplasm. Functionally, the phosphoenolpyruvate-dependent sugar phosphotransferase system (PTS), a major carbohydrate active -transport system, catalyzes the phosphorylation of incoming sugar substrates concomitant with their translocation across the cell membrane. The chain is Putative phosphotransferase enzyme IIB component BB_0367 from Borreliella burgdorferi (strain ATCC 35210 / DSM 4680 / CIP 102532 / B31) (Borrelia burgdorferi).